Here is a 515-residue protein sequence, read N- to C-terminus: Rop guanine nucleotide exchange factor 12 (515 aa).

The PRONE domain occupies 83 to 446; sequence QARERQLLAD…RAGNKRNTPL (364 aa). The residue at position 510 (serine 510) is a Phosphoserine.

Interacts (via C-terminus) with PRK2. Interacts with PRK6. As to expression, expressed in pollen grains.

It localises to the cytoplasm. The protein localises to the cell membrane. Its activity is regulated as follows. Phosphorylation at Ser-510 by PRK2 may release ROPGEF12 auto-inhibition, thereby activating ROPGEF12 and downstream Rop signaling. Functionally, guanine-nucleotide exchange factor (GEF) that acts as an activator of Rop (Rho of plants) GTPases by promoting the exchange of GDP for GTP. May be recruited by PRK2 at the plasma membrane to maintain polar Rop activity in the pollen tube and control polarized pollen tube growth. In Arabidopsis thaliana (Mouse-ear cress), this protein is Rop guanine nucleotide exchange factor 12.